The following is a 474-amino-acid chain: MAEANGKITQVIGAVVDVQFDGQLPAILNALETENNGKRLVLEVAQHLGENTVRTIAMDATEGLVRGLPVKDTGGPIMVPVGDATLGRILNVVGEPVDEGGPVEATQTRAIHQQAPDFAAQATASEILVTGIKVIDLLAPYSKGGKIGLFGGAGVGKTVLIMELINNIAKVHSGYSVFAGVGERTREGNDLYHEMVESGVIKPDDLSKSQVALVYGQMNEPPGARMRVALTGLTVAEQFRDATGTDVLFFVDNIFRFTQAGSEVSALLGRIPSAVGYQPTLATDMGAMQERITSTKNGSITSIQAVYVPADDLTDPAPATTFAHLDATTVLSRAISELGIYPAVDPLDSNSRILDPAVVGEEHYQVARDVQGILQKYKSLQDIIAILGMDELSEEDKLTVARARKIQRFLSQPFDVAKVFTGSDGVQVPLEDTIKSFKAVVAGEYDHLPEAAFYMVGGIEDVKAKAQRLAADAA.

Gly-151–Thr-158 serves as a coordination point for ATP.

This sequence belongs to the ATPase alpha/beta chains family. F-type ATPases have 2 components, CF(1) - the catalytic core - and CF(0) - the membrane proton channel. CF(1) has five subunits: alpha(3), beta(3), gamma(1), delta(1), epsilon(1). CF(0) has three main subunits: a(1), b(2) and c(9-12). The alpha and beta chains form an alternating ring which encloses part of the gamma chain. CF(1) is attached to CF(0) by a central stalk formed by the gamma and epsilon chains, while a peripheral stalk is formed by the delta and b chains.

Its subcellular location is the cell inner membrane. The catalysed reaction is ATP + H2O + 4 H(+)(in) = ADP + phosphate + 5 H(+)(out). Its function is as follows. Produces ATP from ADP in the presence of a proton gradient across the membrane. The catalytic sites are hosted primarily by the beta subunits. The chain is ATP synthase subunit beta from Paracoccus denitrificans (strain Pd 1222).